An 843-amino-acid chain; its full sequence is Glycogen phosphorylase, brain form (843 aa).

Position 2 is an N-acetylalanine (alanine 2). Serine 15 carries the phosphoserine; by PHK; in form phosphorylase A modification. Aspartate 43, tyrosine 197, and arginine 310 together coordinate AMP. Tyrosine 197 carries the phosphotyrosine modification. Residue tyrosine 473 is modified to Phosphotyrosine. Position 569 (lysine 569) interacts with pyridoxal 5'-phosphate. The segment at 677 to 678 is pyridoxal 5'-phosphate; sequence TG. Lysine 681 carries the post-translational modification N6-(pyridoxal phosphate)lysine.

It belongs to the glycogen phosphorylase family. As to quaternary structure, homodimer. Dimers associate into a tetramer to form the enzymatically active phosphorylase A. Pyridoxal 5'-phosphate is required as a cofactor. Phosphorylation of Ser-15 converts phosphorylase B (unphosphorylated) to phosphorylase A.

The catalysed reaction is [(1-&gt;4)-alpha-D-glucosyl](n) + phosphate = [(1-&gt;4)-alpha-D-glucosyl](n-1) + alpha-D-glucose 1-phosphate. With respect to regulation, activity of phosphorylase is controlled both by allosteric means (through the non-covalent binding of metabolites) and by covalent modification. Thus AMP allosterically activates, whereas ATP, ADP, and glucose-6-phosphate allosterically inhibit, phosphorylase B. Glycogen phosphorylase that regulates glycogen mobilization. Phosphorylase is an important allosteric enzyme in carbohydrate metabolism. Enzymes from different sources differ in their regulatory mechanisms and in their natural substrates. However, all known phosphorylases share catalytic and structural properties. This Pongo abelii (Sumatran orangutan) protein is Glycogen phosphorylase, brain form (PYGB).